The sequence spans 384 residues: Beta-ureidopropionase (384 aa).

Residues 72 to 344 enclose the CN hydrolase domain; the sequence is VHVGLVQNRI…DGLLVAKLDL (273 aa). Glu-119 acts as the Proton acceptor in catalysis. Residue Lys-196 is the Proton donor of the active site. The active-site Nucleophile is the Cys-233. The residue at position 378 (Ser-378) is a Phosphoserine.

This sequence belongs to the carbon-nitrogen hydrolase superfamily. BUP family. As to quaternary structure, homodimer, homotetramer, homooctamer; can also form higher homooligomers. As to expression, detected in liver (at protein level).

Its subcellular location is the cytoplasm. It carries out the reaction 3-(carbamoylamino)propanoate + H2O + 2 H(+) = beta-alanine + NH4(+) + CO2. The catalysed reaction is 3-(carbamoylamino)-2-methylpropanoate + H2O + 2 H(+) = (R)-3-amino-2-methylpropanoate + NH4(+) + CO2. The protein operates within amino-acid biosynthesis; beta-alanine biosynthesis. Its activity is regulated as follows. Strongly inhibited by 50 mM Zn(2+). Not inhibited by EDTA. Competitively inhibited by beta-alanine, 5-aminolevulinic acid (ALA), beta-aminoisobutyrate and 4-ureidobutyrate. In terms of biological role, catalyzes a late step in pyrimidine degradation. Converts N-carbamoyl-beta-alanine (3-ureidopropanoate) into beta-alanine, ammonia and carbon dioxide. Likewise, converts N-carbamoyl-beta-aminoisobutyrate (3-ureidoisobutyrate) into beta-aminoisobutyrate, ammonia and carbon dioxide. This Homo sapiens (Human) protein is Beta-ureidopropionase (UPB1).